We begin with the raw amino-acid sequence, 379 residues long: tRNA(Met) cytidine acetate ligase (379 aa).

Residues 8–21 (IAEFNPFHKGHEYL), Gly97, Asn153, and Arg176 contribute to the ATP site.

It belongs to the TmcAL family.

The protein localises to the cytoplasm. The enzyme catalyses cytidine(34) in elongator tRNA(Met) + acetate + ATP = N(4)-acetylcytidine(34) in elongator tRNA(Met) + AMP + diphosphate. Functionally, catalyzes the formation of N(4)-acetylcytidine (ac(4)C) at the wobble position of elongator tRNA(Met), using acetate and ATP as substrates. First activates an acetate ion to form acetyladenylate (Ac-AMP) and then transfers the acetyl group to tRNA to form ac(4)C34. The protein is tRNA(Met) cytidine acetate ligase of Lactococcus lactis subsp. cremoris (strain MG1363).